Here is a 164-residue protein sequence, read N- to C-terminus: Crossover junction endodeoxyribonuclease RuvC (164 aa).

Residues Asp-7, Glu-67, and Asp-140 contribute to the active site. Mg(2+) contacts are provided by Asp-7, Glu-67, and Asp-140.

Belongs to the RuvC family. In terms of assembly, homodimer which binds Holliday junction (HJ) DNA. The HJ becomes 2-fold symmetrical on binding to RuvC with unstacked arms; it has a different conformation from HJ DNA in complex with RuvA. In the full resolvosome a probable DNA-RuvA(4)-RuvB(12)-RuvC(2) complex forms which resolves the HJ. The cofactor is Mg(2+).

It localises to the cytoplasm. The enzyme catalyses Endonucleolytic cleavage at a junction such as a reciprocal single-stranded crossover between two homologous DNA duplexes (Holliday junction).. Functionally, the RuvA-RuvB-RuvC complex processes Holliday junction (HJ) DNA during genetic recombination and DNA repair. Endonuclease that resolves HJ intermediates. Cleaves cruciform DNA by making single-stranded nicks across the HJ at symmetrical positions within the homologous arms, yielding a 5'-phosphate and a 3'-hydroxyl group; requires a central core of homology in the junction. The consensus cleavage sequence is 5'-(A/T)TT(C/G)-3'. Cleavage occurs on the 3'-side of the TT dinucleotide at the point of strand exchange. HJ branch migration catalyzed by RuvA-RuvB allows RuvC to scan DNA until it finds its consensus sequence, where it cleaves and resolves the cruciform DNA. The protein is Crossover junction endodeoxyribonuclease RuvC of Pelotomaculum thermopropionicum (strain DSM 13744 / JCM 10971 / SI).